The following is a 351-amino-acid chain: Peptide chain release factor 1 (351 aa).

Q229 bears the N5-methylglutamine mark. The tract at residues 279–300 is disordered; it reads ADAERAADRKSQVGSGDRSERI.

The protein belongs to the prokaryotic/mitochondrial release factor family. Methylated by PrmC. Methylation increases the termination efficiency of RF1.

The protein resides in the cytoplasm. Its function is as follows. Peptide chain release factor 1 directs the termination of translation in response to the peptide chain termination codons UAG and UAA. The polypeptide is Peptide chain release factor 1 (Paracoccus denitrificans (strain Pd 1222)).